Reading from the N-terminus, the 448-residue chain is Tubulin beta chain (448 aa).

GTP-binding residues include Q11, E69, S138, G142, T143, G144, N204, and N226. Mg(2+) is bound at residue E69. The segment at 429 to 448 (GIDEGDEDYEIEEEKEPLEY) is disordered.

Belongs to the tubulin family. In terms of assembly, dimer of alpha and beta chains. A typical microtubule is a hollow water-filled tube with an outer diameter of 25 nm and an inner diameter of 15 nM. Alpha-beta heterodimers associate head-to-tail to form protofilaments running lengthwise along the microtubule wall with the beta-tubulin subunit facing the microtubule plus end conferring a structural polarity. Microtubules usually have 13 protofilaments but different protofilament numbers can be found in some organisms and specialized cells. It depends on Mg(2+) as a cofactor.

Its subcellular location is the cytoplasm. The protein resides in the cytoskeleton. Its function is as follows. Tubulin is the major constituent of microtubules, a cylinder consisting of laterally associated linear protofilaments composed of alpha- and beta-tubulin heterodimers. Microtubules grow by the addition of GTP-tubulin dimers to the microtubule end, where a stabilizing cap forms. Below the cap, tubulin dimers are in GDP-bound state, owing to GTPase activity of alpha-tubulin. This chain is Tubulin beta chain (nda3), found in Schizosaccharomyces pombe (strain 972 / ATCC 24843) (Fission yeast).